We begin with the raw amino-acid sequence, 306 residues long: Bifunctional protein FolD 2 (306 aa).

NADP(+)-binding positions include 169–171 and Ile-235; that span reads GHS.

The protein belongs to the tetrahydrofolate dehydrogenase/cyclohydrolase family. Homodimer.

The enzyme catalyses (6R)-5,10-methylene-5,6,7,8-tetrahydrofolate + NADP(+) = (6R)-5,10-methenyltetrahydrofolate + NADPH. The catalysed reaction is (6R)-5,10-methenyltetrahydrofolate + H2O = (6R)-10-formyltetrahydrofolate + H(+). It participates in one-carbon metabolism; tetrahydrofolate interconversion. Its function is as follows. Catalyzes the oxidation of 5,10-methylenetetrahydrofolate to 5,10-methenyltetrahydrofolate and then the hydrolysis of 5,10-methenyltetrahydrofolate to 10-formyltetrahydrofolate. In Mesorhizobium japonicum (strain LMG 29417 / CECT 9101 / MAFF 303099) (Mesorhizobium loti (strain MAFF 303099)), this protein is Bifunctional protein FolD 2.